A 184-amino-acid polypeptide reads, in one-letter code: Prolyl-tRNA synthetase associated domain-containing protein 1 (184 aa).

Belongs to the PRORSD1 family.

This Danio rerio (Zebrafish) protein is Prolyl-tRNA synthetase associated domain-containing protein 1 (Prorsd1).